The following is a 256-amino-acid chain: UPF0246 protein HCH_04801 (256 aa).

Belongs to the UPF0246 family.

This Hahella chejuensis (strain KCTC 2396) protein is UPF0246 protein HCH_04801.